A 980-amino-acid polypeptide reads, in one-letter code: Serine/threonine-protein phosphatase 4 regulatory subunit 3 (980 aa).

One can recognise a WH1 domain in the interval 1-105 (MTTDTRRRVK…EKICQVQGKD (105 aa)). 3 disordered regions span residues 640–668 (RDKM…RQME), 695–861 (VSEK…SLCD), and 885–980 (VTAA…ARQA). Residues 695–708 (VSEKNGPQTQNQQK) show a composition bias toward polar residues. Low complexity-rich tracts occupy residues 709-749 (SSPP…SSSP), 757-789 (QTQA…QQTQ), 803-859 (EAPQ…AASL), and 885-926 (VTAA…SPAS). Residues 929 to 939 (QDANSTEGTSS) show a composition bias toward polar residues. The span at 940–951 (EADKTTAKKGLV) shows a compositional bias: basic and acidic residues. The span at 953–968 (YESDSGEDDYEEDEYS) shows a compositional bias: acidic residues.

The protein belongs to the SMEK family. In terms of assembly, serine/threonine-protein phosphatase 4 (PP4) occurs in different assemblies of the catalytic and one or more regulatory subunits. Probably part of a PP4 PPP4C-PPP4R2-PPP4R3 complex containing Pp4-19C, PPP4R2r and flfl. Interacts with mira. In terms of tissue distribution, expressed in neuroblasts.

Its subcellular location is the nucleus. The protein resides in the membrane. It localises to the cytoplasm. Its function is as follows. Regulatory subunit of serine/threonine-protein phosphatase 4. The probable PP4 complex Pp4-19C-PPP4R2r-flfl (PPP4C-PPP4R2-PPP4R3) is required to prevent caspase induced cell death (in vitro). May be involved in DNA damage repair. Key mediator specific for the localization of mira and associated cell fate determinants during both interphase and mitosis. Nuclear Flfl is required to exclude mira/pros from the nucleus when inefficiently bound to the cytoskeleton/cortex, whereas cytosolic or membrane-associated flfl is required for the cortical association and asymmetric localization of mira/pros/brat/stau at metaphase and anaphase. In Drosophila melanogaster (Fruit fly), this protein is Serine/threonine-protein phosphatase 4 regulatory subunit 3 (flfl).